A 476-amino-acid chain; its full sequence is Cysteine--tRNA ligase (476 aa).

Cys36 serves as a coordination point for Zn(2+). The short motif at 38 to 48 (PTVYDYAHIGN) is the 'HIGH' region element. Positions 221, 246, and 250 each coordinate Zn(2+). Residues 278–282 (KMSKS) carry the 'KMSKS' region motif. Residue Lys281 participates in ATP binding.

The protein belongs to the class-I aminoacyl-tRNA synthetase family. Monomer. Requires Zn(2+) as cofactor.

The protein resides in the cytoplasm. The catalysed reaction is tRNA(Cys) + L-cysteine + ATP = L-cysteinyl-tRNA(Cys) + AMP + diphosphate. The protein is Cysteine--tRNA ligase of Chlamydia caviae (strain ATCC VR-813 / DSM 19441 / 03DC25 / GPIC) (Chlamydophila caviae).